The sequence spans 561 residues: Urocanate hydratase (561 aa).

NAD(+)-binding positions include 52-53, glutamine 130, 176-178, glutamate 196, arginine 201, 242-243, 263-267, 273-274, and tyrosine 322; these read GG, GMG, NA, QTSAH, and YL. Cysteine 410 is a catalytic residue. An NAD(+)-binding site is contributed by glycine 492.

The protein belongs to the urocanase family. The cofactor is NAD(+).

The protein resides in the cytoplasm. It catalyses the reaction 4-imidazolone-5-propanoate = trans-urocanate + H2O. It participates in amino-acid degradation; L-histidine degradation into L-glutamate; N-formimidoyl-L-glutamate from L-histidine: step 2/3. Catalyzes the conversion of urocanate to 4-imidazolone-5-propionate. This is Urocanate hydratase from Salmonella newport (strain SL254).